We begin with the raw amino-acid sequence, 601 residues long: 1-deoxy-D-xylulose-5-phosphate synthase (601 aa).

Residues histidine 63 and 104 to 106 (GHS) contribute to the thiamine diphosphate site. Residue aspartate 135 coordinates Mg(2+). Thiamine diphosphate-binding positions include 136–137 (GS), asparagine 164, tyrosine 272, and glutamate 353. Residue asparagine 164 coordinates Mg(2+).

Belongs to the transketolase family. DXPS subfamily. In terms of assembly, homodimer. The cofactor is Mg(2+). Thiamine diphosphate is required as a cofactor.

It carries out the reaction D-glyceraldehyde 3-phosphate + pyruvate + H(+) = 1-deoxy-D-xylulose 5-phosphate + CO2. Its pathway is metabolic intermediate biosynthesis; 1-deoxy-D-xylulose 5-phosphate biosynthesis; 1-deoxy-D-xylulose 5-phosphate from D-glyceraldehyde 3-phosphate and pyruvate: step 1/1. In terms of biological role, catalyzes the acyloin condensation reaction between C atoms 2 and 3 of pyruvate and glyceraldehyde 3-phosphate to yield 1-deoxy-D-xylulose-5-phosphate (DXP). This chain is 1-deoxy-D-xylulose-5-phosphate synthase, found in Aliarcobacter butzleri (strain RM4018) (Arcobacter butzleri).